A 185-amino-acid polypeptide reads, in one-letter code: Anaphase-promoting complex subunit 10 (185 aa).

Thr-2 carries the N-acetylthreonine modification. A DOC domain is found at 2–185 (TTPNKTPPGA…IDFMMYRSIR (184 aa)). Lys-169 is modified (N6-acetyllysine).

Belongs to the APC10 family. As to quaternary structure, the mammalian APC/C is composed at least of 14 distinct subunits ANAPC1, ANAPC2, CDC27/APC3, ANAPC4, ANAPC5, CDC16/APC6, ANAPC7, CDC23/APC8, ANAPC10, ANAPC11, CDC26/APC12, ANAPC13, ANAPC15 and ANAPC16 that assemble into a complex of at least 19 chains with a combined molecular mass of around 1.2 MDa; APC/C interacts with FZR1 and FBXO5. The C-terminus of APC10 binds to CDC27/APC3. Interacts with PIWIL1; interaction only takes place when PIWIL1 binds piRNA. Interacts with FBXO43; the interaction is direct.

The protein operates within protein modification; protein ubiquitination. Its function is as follows. Component of the anaphase promoting complex/cyclosome (APC/C), a cell cycle-regulated E3 ubiquitin ligase that controls progression through mitosis and the G1 phase of the cell cycle. The APC/C complex acts by mediating ubiquitination and subsequent degradation of target proteins: it mainly mediates the formation of 'Lys-11'-linked polyubiquitin chains and, to a lower extent, the formation of 'Lys-48'- and 'Lys-63'-linked polyubiquitin chains. The APC/C complex catalyzes assembly of branched 'Lys-11'-/'Lys-48'-linked branched ubiquitin chains on target proteins. This is Anaphase-promoting complex subunit 10 (Anapc10) from Mus musculus (Mouse).